The chain runs to 596 residues: Elongation factor 4 (596 aa).

In terms of domain architecture, tr-type G spans 2–183; that stretch reads KNIRNFSIIA…EIIRRIPAPN (182 aa). GTP contacts are provided by residues 14–19 and 130–133; these read DHGKST and NKID.

It belongs to the TRAFAC class translation factor GTPase superfamily. Classic translation factor GTPase family. LepA subfamily.

Its subcellular location is the cell inner membrane. The catalysed reaction is GTP + H2O = GDP + phosphate + H(+). Required for accurate and efficient protein synthesis under certain stress conditions. May act as a fidelity factor of the translation reaction, by catalyzing a one-codon backward translocation of tRNAs on improperly translocated ribosomes. Back-translocation proceeds from a post-translocation (POST) complex to a pre-translocation (PRE) complex, thus giving elongation factor G a second chance to translocate the tRNAs correctly. Binds to ribosomes in a GTP-dependent manner. The protein is Elongation factor 4 of Wolinella succinogenes (strain ATCC 29543 / DSM 1740 / CCUG 13145 / JCM 31913 / LMG 7466 / NCTC 11488 / FDC 602W) (Vibrio succinogenes).